The primary structure comprises 346 residues: MSEETFPQASALTLLSDPNIDLLSLVAAAGEVRMTYFGRQVMLHRINDIQNGLCPEDCGYCAQSKISDAPIKKYPLKSEEDIIQEAYEAKAKGVYRYCMVSSGRGPTAERTEHLAHIIRRIKNEVGIQTCLSAGLMDHEQAAVLKEAGLDRLNHNLNTSESHTPDIVTTHTFQDRINTLKAARSAGLDLCSGMIAGMGETDQDIVDIAYQLHEYQVPSIPINFLIPISGNPIYDCNQLTPQRCLRILCLFRFVNPKAEIRIGGGREGHLRSLQALALYPANSLFVEGYLATRGHSVDQVYQLIHDAGFEVAGETSLTGDLSATSQFQLDDNPNILNPQTTISFSNS.

A Radical SAM core domain is found at 36–265 (YFGRQVMLHR…KAEIRIGGGR (230 aa)). Residues C54, C58, and C61 each coordinate [4Fe-4S] cluster. 4 residues coordinate [2Fe-2S] cluster: C98, C130, C190, and R260.

The protein belongs to the radical SAM superfamily. Biotin synthase family. As to quaternary structure, homodimer. Requires [4Fe-4S] cluster as cofactor. The cofactor is [2Fe-2S] cluster.

The enzyme catalyses (4R,5S)-dethiobiotin + (sulfur carrier)-SH + 2 reduced [2Fe-2S]-[ferredoxin] + 2 S-adenosyl-L-methionine = (sulfur carrier)-H + biotin + 2 5'-deoxyadenosine + 2 L-methionine + 2 oxidized [2Fe-2S]-[ferredoxin]. Its pathway is cofactor biosynthesis; biotin biosynthesis; biotin from 7,8-diaminononanoate: step 2/2. Functionally, catalyzes the conversion of dethiobiotin (DTB) to biotin by the insertion of a sulfur atom into dethiobiotin via a radical-based mechanism. In Acaryochloris marina (strain MBIC 11017), this protein is Biotin synthase.